Consider the following 482-residue polypeptide: MSIRVRFAPSPTGPLHIGGARSALFNWLYARHHGGQFLVRIEDTDMERSSRESEENILNALRWLGIDWDEGIEVGGPNGPYRQTERLDIYRQLAKELVDAGHAYYCYCSEEELAVEREALMEKGELPRYLGRCRNLCPEDKAKFEAEGKKPVLRFRVPENQTITINDHVRGQVEFESNGIGDFIIMKSDNIPTYNFAVVVDDHDMGITHVVRAEEHLSNTPRQILIYEALGWQKPEFAHISLILGKDRSKMSKRHGATSIEQYHNLGYLPEALVNFLALLGWSPGGEEEIFTLKEIKEQFTLDRVAKNPAVFDIDKLNWLNGHYIRQASVERLTKLAVPYLQGAGYLKEEISTEKMAWLEQVVAIARNYISYMQEITQHVDVFFRDNVEITEEDAKQVQGWEQMPVVMKAAHELFSAANELTEESVKAIIKAIGKQTGLKGKFIFQPLRVGITGQTHGPELHQIIPVIGKERTLARLEAALK.

A 'HIGH' region motif is present at residues 9–19 (PSPTGPLHIGG). The 'KMSKS' region signature appears at 250–254 (KMSKR). Lysine 253 is an ATP binding site.

The protein belongs to the class-I aminoacyl-tRNA synthetase family. Glutamate--tRNA ligase type 1 subfamily. In terms of assembly, monomer.

Its subcellular location is the cytoplasm. It catalyses the reaction tRNA(Glu) + L-glutamate + ATP = L-glutamyl-tRNA(Glu) + AMP + diphosphate. In terms of biological role, catalyzes the attachment of glutamate to tRNA(Glu) in a two-step reaction: glutamate is first activated by ATP to form Glu-AMP and then transferred to the acceptor end of tRNA(Glu). In Desulforamulus reducens (strain ATCC BAA-1160 / DSM 100696 / MI-1) (Desulfotomaculum reducens), this protein is Glutamate--tRNA ligase.